The chain runs to 515 residues: Ent-isokaurene C2/C3-hydroxylase (515 aa).

Residues 5-25 (LILDLCLSALFVVVLSKLVSS) form a helical membrane-spanning segment. Residue Cys-452 participates in heme binding.

Belongs to the cytochrome P450 family. Heme serves as cofactor.

The protein resides in the membrane. It carries out the reaction ent-isokaurene + 2 reduced [NADPH--hemoprotein reductase] + 2 O2 = ent-isokaurene-2beta,3beta-diol + 2 oxidized [NADPH--hemoprotein reductase] + 2 H2O + 2 H(+). Its function is as follows. Enzyme of the diterpenoid metabolism involved in the biosynthesis of antibacterial oryzalides such as phytocassane. This is Ent-isokaurene C2/C3-hydroxylase (CYP71Z6) from Oryza sativa subsp. japonica (Rice).